We begin with the raw amino-acid sequence, 392 residues long: Leucine aminopeptidase 1 (392 aa).

An N-terminal signal peptide occupies residues 1–18 (MKFSQASLLAACLPAISA). The propeptide occupies 19-82 (RFIETAEADN…LGSTRLNAQT (64 aa)). An N-linked (GlcNAc...) asparagine glycan is attached at N174. Residues H182, D201, E240, and D267 each contribute to the Zn(2+) site. A disulfide bridge connects residues C316 and C320. Residue H349 participates in Zn(2+) binding.

The protein belongs to the peptidase M28 family. M28E subfamily. Monomer. The cofactor is Zn(2+).

The protein localises to the secreted. Functionally, extracellular aminopeptidase that allows assimilation of proteinaceous substrates. The protein is Leucine aminopeptidase 1 (LAP1) of Fusarium vanettenii (strain ATCC MYA-4622 / CBS 123669 / FGSC 9596 / NRRL 45880 / 77-13-4) (Fusarium solani subsp. pisi).